The sequence spans 153 residues: Regulatory protein RecX (153 aa).

Belongs to the RecX family.

Its subcellular location is the cytoplasm. Its function is as follows. Modulates RecA activity. The sequence is that of Regulatory protein RecX from Neisseria gonorrhoeae (strain ATCC 700825 / FA 1090).